A 285-amino-acid chain; its full sequence is Protease HtpX homolog (285 aa).

2 consecutive transmembrane segments (helical) span residues 7–27 (TAML…MIGG) and 30–50 (GMTI…WFSD). His131 lines the Zn(2+) pocket. Glu132 is an active-site residue. Position 135 (His135) interacts with Zn(2+). A run of 2 helical transmembrane segments spans residues 141–161 (ILIS…ANFA) and 177–197 (IAGI…QMAI). A Zn(2+)-binding site is contributed by Glu202.

Belongs to the peptidase M48B family. The cofactor is Zn(2+).

The protein localises to the cell inner membrane. The protein is Protease HtpX homolog of Paraburkholderia phytofirmans (strain DSM 17436 / LMG 22146 / PsJN) (Burkholderia phytofirmans).